The following is a 51-amino-acid chain: Sperm protamine P1 (51 aa).

The segment covering 1–13 (MARYRCCRSQSRS) has biased composition (low complexity). Residues 1-30 (MARYRCCRSQSRSRYYRQRQRSRRRRRRSC) form a disordered region. Residues 14–30 (RYYRQRQRSRRRRRRSC) are compositionally biased toward basic residues. A disulfide bridge links C40 with C48.

It belongs to the protamine P1 family. In terms of assembly, cross-linked by interchain disulfide bonds around the DNA-helix. In terms of processing, phosphorylated by SRPK1. In terms of tissue distribution, testis.

Its subcellular location is the nucleus. The protein localises to the chromosome. Functionally, protamines substitute for histones in the chromatin of sperm during the haploid phase of spermatogenesis. They compact sperm DNA into a highly condensed, stable and inactive complex. The sequence is that of Sperm protamine P1 (PRM1) from Homo sapiens (Human).